Consider the following 89-residue polypeptide: Small ribosomal subunit protein uS15 (89 aa).

Basic and acidic residues predominate over residues 1–13 (MTISKERKEEVIS). Positions 1–24 (MTISKERKEEVISEHGAAAGDTGS) are disordered.

The protein belongs to the universal ribosomal protein uS15 family. As to quaternary structure, part of the 30S ribosomal subunit. Forms a bridge to the 50S subunit in the 70S ribosome, contacting the 23S rRNA.

In terms of biological role, one of the primary rRNA binding proteins, it binds directly to 16S rRNA where it helps nucleate assembly of the platform of the 30S subunit by binding and bridging several RNA helices of the 16S rRNA. Functionally, forms an intersubunit bridge (bridge B4) with the 23S rRNA of the 50S subunit in the ribosome. This is Small ribosomal subunit protein uS15 from Rhodopirellula baltica (strain DSM 10527 / NCIMB 13988 / SH1).